A 271-amino-acid chain; its full sequence is Thiazole synthase (271 aa).

Residue K95 is the Schiff-base intermediate with DXP of the active site. 1-deoxy-D-xylulose 5-phosphate-binding positions include G156, 182-183, and 204-205; these read AG and NT.

This sequence belongs to the ThiG family. In terms of assembly, homotetramer. Forms heterodimers with either ThiH or ThiS.

It is found in the cytoplasm. It catalyses the reaction [ThiS sulfur-carrier protein]-C-terminal-Gly-aminoethanethioate + 2-iminoacetate + 1-deoxy-D-xylulose 5-phosphate = [ThiS sulfur-carrier protein]-C-terminal Gly-Gly + 2-[(2R,5Z)-2-carboxy-4-methylthiazol-5(2H)-ylidene]ethyl phosphate + 2 H2O + H(+). Its pathway is cofactor biosynthesis; thiamine diphosphate biosynthesis. In terms of biological role, catalyzes the rearrangement of 1-deoxy-D-xylulose 5-phosphate (DXP) to produce the thiazole phosphate moiety of thiamine. Sulfur is provided by the thiocarboxylate moiety of the carrier protein ThiS. In vitro, sulfur can be provided by H(2)S. In Yersinia pestis, this protein is Thiazole synthase.